Reading from the N-terminus, the 474-residue chain is tRNA-2-methylthio-N(6)-dimethylallyladenosine synthase (474 aa).

Residues 3-120 (KKLHIKTWGC…LPEMINAVRG (118 aa)) enclose the MTTase N-terminal domain. 6 residues coordinate [4Fe-4S] cluster: Cys12, Cys49, Cys83, Cys157, Cys161, and Cys164. The Radical SAM core domain maps to 143–375 (RADGPTAFVS…QERINQQAMA (233 aa)). One can recognise a TRAM domain in the interval 378 to 441 (RRMLGTVQRI…TNSLRGKIVR (64 aa)).

Belongs to the methylthiotransferase family. MiaB subfamily. As to quaternary structure, monomer. The cofactor is [4Fe-4S] cluster.

Its subcellular location is the cytoplasm. It catalyses the reaction N(6)-dimethylallyladenosine(37) in tRNA + (sulfur carrier)-SH + AH2 + 2 S-adenosyl-L-methionine = 2-methylsulfanyl-N(6)-dimethylallyladenosine(37) in tRNA + (sulfur carrier)-H + 5'-deoxyadenosine + L-methionine + A + S-adenosyl-L-homocysteine + 2 H(+). Functionally, catalyzes the methylthiolation of N6-(dimethylallyl)adenosine (i(6)A), leading to the formation of 2-methylthio-N6-(dimethylallyl)adenosine (ms(2)i(6)A) at position 37 in tRNAs that read codons beginning with uridine. The chain is tRNA-2-methylthio-N(6)-dimethylallyladenosine synthase from Klebsiella pneumoniae (strain 342).